Reading from the N-terminus, the 211-residue chain is Protein-L-isoaspartate O-methyltransferase (211 aa).

The active site involves serine 62.

The protein belongs to the methyltransferase superfamily. L-isoaspartyl/D-aspartyl protein methyltransferase family.

It is found in the cytoplasm. It carries out the reaction [protein]-L-isoaspartate + S-adenosyl-L-methionine = [protein]-L-isoaspartate alpha-methyl ester + S-adenosyl-L-homocysteine. Its function is as follows. Catalyzes the methyl esterification of L-isoaspartyl residues in peptides and proteins that result from spontaneous decomposition of normal L-aspartyl and L-asparaginyl residues. It plays a role in the repair and/or degradation of damaged proteins. This is Protein-L-isoaspartate O-methyltransferase from Shewanella oneidensis (strain ATCC 700550 / JCM 31522 / CIP 106686 / LMG 19005 / NCIMB 14063 / MR-1).